A 299-amino-acid chain; its full sequence is Taste receptor type 2 member 1 (299 aa).

Over 1–9 (MLESHLIIH) the chain is Extracellular. A helical membrane pass occupies residues 10 to 30 (FLLAVIQFLLGTFTNGIIVVV). The Cytoplasmic segment spans residues 31–55 (NGIDLIKHRKMAPLDLLLSCLAVSR). A helical transmembrane segment spans residues 56–76 (IFLQLFIFYVNVIVIFFIEFI). Residues 77–81 (MCSEN) are Extracellular-facing. The helical transmembrane segment at 82 to 102 (CAILLFINELELWLATWLGVF) threads the bilayer. Topologically, residues 103–124 (YCAKVASVPHPLFIWLKMKISK) are cytoplasmic. A helical transmembrane segment spans residues 125-145 (LVPWMILGSLLYVSMTCVFHS). Residues 146–178 (KYAGFMVPYFLRNFFSQNATIQKEDTPAIQIFS) are Extracellular-facing. An N-linked (GlcNAc...) asparagine glycan is attached at Asn-163. A helical membrane pass occupies residues 179-199 (FVAEFLVPLLIFLVAVLLLIF). At 200–222 (SLGRHTRQMRNTVAGSRVPGRGA) the chain is on the cytoplasmic side. The helical transmembrane segment at 223 to 243 (PISALLSILSFVILYFSHCMI) threads the bilayer. The Extracellular portion of the chain corresponds to 244 to 257 (KVFLSSLKFHVRSF). Residues 258–278 (ILPFFILVIGIYPSGHSLILI) traverse the membrane as a helical segment. At 279-299 (LGNXKLKQNAKKFLLHSKCCQ) the chain is on the cytoplasmic side.

It belongs to the G-protein coupled receptor T2R family.

The protein localises to the membrane. Receptor that may play a role in the perception of bitterness and is gustducin-linked. May play a role in sensing the chemical composition of the gastrointestinal content. The activity of this receptor may stimulate alpha gustducin, mediate PLC-beta-2 activation and lead to the gating of TRPM5. The polypeptide is Taste receptor type 2 member 1 (TAS2R1) (Pongo pygmaeus (Bornean orangutan)).